A 182-amino-acid polypeptide reads, in one-letter code: Negative transcriptional regulator PadR (182 aa).

Belongs to the PadR family. As to quaternary structure, homodimer.

It is found in the cytoplasm. Its activity is regulated as follows. PadR repressor activity is inhibited in the presence of phenolic acids, which directly modulate PadR binding to the promoter of padC, leading to the dissociation of PadR from the operator DNA and expression of padC. In the presence of MgCl(2), binding is not altered by phenolic acids. In terms of biological role, transcriptional regulator involved in the regulation of the metabolism of phenolic acids. In the absence of phenolic acids, represses the expression of padC, which encodes a phenolic acid decarboxylase (PAD) involved in the detoxification of harmful phenolic acids. Acts by binding to the padC promoter region, preventing the transcription of the gene. The sequence is that of Negative transcriptional regulator PadR from Bacillus subtilis (strain 168).